Reading from the N-terminus, the 311-residue chain is Heme A synthase (311 aa).

The Cytoplasmic portion of the chain corresponds to 1–6 (MQRFIK). A helical transmembrane segment spans residues 7 to 27 (WLAVITSLDLLIVLLGGALVT). Over 28-62 (KTGSGQGCGKSWPLCNGEFVPSNLSMETIIELSHR) the chain is Extracellular. A disulfide bridge connects residues cysteine 35 and cysteine 42. Residue glutamate 58 is part of the active site. Histidine 61 is a binding site for heme o. The chain crosses the membrane as a helical span at residues 63–83 (LTSGSAGILVTLLCILSWKYY). Residues 84 to 91 (KHVRETKT) lie on the Cytoplasmic side of the membrane. The helical transmembrane segment at 92-112 (LAILSFVFLVAQALMGAAAVV) threads the bilayer. At 113–121 (WGQMPAVLA) the chain is on the extracellular side. A helical transmembrane segment spans residues 122–142 (IHFGISLISFASVILLTCLIF). A heme o-binding site is contributed by histidine 123. Residues 143–159 (EIDQKFDARSLIMDKKM) are Cytoplasmic-facing. Residues 160 to 180 (KFHIYGVTIYSYIVVYTGALV) traverse the membrane as a helical segment. The Extracellular portion of the chain corresponds to 181 to 211 (RHERASLACPDFPLCSKNRPMPTQLHEWVQM). Cysteines 189 and 195 form a disulfide. A helical transmembrane segment spans residues 212–232 (GHRVAAMLIFAWILYAMILAI). Residue histidine 213 coordinates heme b. Topologically, residues 233 to 243 (RHYKQQPVVYW) are cytoplasmic. The chain crosses the membrane as a helical span at residues 244-264 (GWIISFILVTLQAVVGVLVVF). Over 265 to 271 (TNASLAM) the chain is Extracellular. A helical transmembrane segment spans residues 272-292 (ALLHSLFISCLFAVLCYLVML). Histidine 275 serves as a coordination point for heme b. Residues 293–311 (GTRSKVNAKEAELTSKQTK) lie on the Cytoplasmic side of the membrane.

It belongs to the COX15/CtaA family. Type 1 subfamily. In terms of assembly, interacts with CtaB. Heme b is required as a cofactor.

The protein resides in the cell membrane. It carries out the reaction Fe(II)-heme o + 2 A + H2O = Fe(II)-heme a + 2 AH2. Its pathway is porphyrin-containing compound metabolism; heme A biosynthesis; heme A from heme O: step 1/1. Functionally, catalyzes the conversion of heme O to heme A by two successive hydroxylations of the methyl group at C8. The first hydroxylation forms heme I, the second hydroxylation results in an unstable dihydroxymethyl group, which spontaneously dehydrates, resulting in the formyl group of heme A. In Bacillus cereus (strain ATCC 14579 / DSM 31 / CCUG 7414 / JCM 2152 / NBRC 15305 / NCIMB 9373 / NCTC 2599 / NRRL B-3711), this protein is Heme A synthase.